The chain runs to 504 residues: D-alanine--D-alanyl carrier protein ligase (504 aa).

152 to 153 (TS) is a binding site for ATP. Residue aspartate 197 participates in D-alanine binding. 292-297 (NTYGPT) contacts ATP. Valine 301 is a D-alanine binding site. ATP contacts are provided by residues aspartate 383, 394-397 (YNGR), and lysine 492. Lysine 492 contacts D-alanine.

The protein belongs to the ATP-dependent AMP-binding enzyme family. DltA subfamily.

It is found in the cytoplasm. It carries out the reaction holo-[D-alanyl-carrier protein] + D-alanine + ATP = D-alanyl-[D-alanyl-carrier protein] + AMP + diphosphate. Its pathway is cell wall biogenesis; lipoteichoic acid biosynthesis. Functionally, catalyzes the first step in the D-alanylation of lipoteichoic acid (LTA), the activation of D-alanine and its transfer onto the D-alanyl carrier protein (Dcp) DltC. In an ATP-dependent two-step reaction, forms a high energy D-alanyl-AMP intermediate, followed by transfer of the D-alanyl residue as a thiol ester to the phosphopantheinyl prosthetic group of the Dcp. D-alanylation of LTA plays an important role in modulating the properties of the cell wall in Gram-positive bacteria, influencing the net charge of the cell wall. The protein is D-alanine--D-alanyl carrier protein ligase of Bacillus thuringiensis (strain Al Hakam).